The primary structure comprises 98 residues: NADH-ubiquinone oxidoreductase chain 4L (98 aa).

The next 3 helical transmembrane spans lie at 1–21, 29–49, and 61–81; these read MSLT…GLLM, SLLC…MAIL, and IILL…LVMV.

This sequence belongs to the complex I subunit 4L family. As to quaternary structure, core subunit of respiratory chain NADH dehydrogenase (Complex I) which is composed of 45 different subunits.

Its subcellular location is the mitochondrion inner membrane. It carries out the reaction a ubiquinone + NADH + 5 H(+)(in) = a ubiquinol + NAD(+) + 4 H(+)(out). Functionally, core subunit of the mitochondrial membrane respiratory chain NADH dehydrogenase (Complex I) which catalyzes electron transfer from NADH through the respiratory chain, using ubiquinone as an electron acceptor. Part of the enzyme membrane arm which is embedded in the lipid bilayer and involved in proton translocation. This Vampyressa melissa (Melissa's yellow-eared bat) protein is NADH-ubiquinone oxidoreductase chain 4L (MT-ND4L).